Consider the following 212-residue polypeptide: Stem bromelain (212 aa).

Cystine bridges form between C23/C63 and C57/C96. The active site involves C26. N-linked (GlcNAc...) asparagine glycosylation is present at N117. Cysteines 152 and 199 form a disulfide. H158 is an active-site residue.

Belongs to the peptidase C1 family.

It carries out the reaction Broad specificity for cleavage of proteins, but strong preference for Z-Arg-Arg-|-NHMec among small molecule substrates.. Cysteine proteinase with a high level of diversity in substrate specificity. The sequence is that of Stem bromelain from Ananas comosus (Pineapple).